A 346-amino-acid chain; its full sequence is tRNA N6-adenosine threonylcarbamoyltransferase (346 aa).

Fe cation-binding residues include His-111 and His-115. Substrate-binding positions include 134 to 138, Asp-167, Gly-180, and Asn-279; that span reads LVSGG. Asp-307 contacts Fe cation.

Belongs to the KAE1 / TsaD family. Fe(2+) is required as a cofactor.

It is found in the cytoplasm. It carries out the reaction L-threonylcarbamoyladenylate + adenosine(37) in tRNA = N(6)-L-threonylcarbamoyladenosine(37) in tRNA + AMP + H(+). Required for the formation of a threonylcarbamoyl group on adenosine at position 37 (t(6)A37) in tRNAs that read codons beginning with adenine. Is involved in the transfer of the threonylcarbamoyl moiety of threonylcarbamoyl-AMP (TC-AMP) to the N6 group of A37, together with TsaE and TsaB. TsaD likely plays a direct catalytic role in this reaction. The sequence is that of tRNA N6-adenosine threonylcarbamoyltransferase from Burkholderia cenocepacia (strain HI2424).